Reading from the N-terminus, the 695-residue chain is Polyribonucleotide nucleotidyltransferase (695 aa).

The Mg(2+) site is built by Asp488 and Asp494. The region spanning 554 to 613 is the KH domain; the sequence is PKTAVIKIQTDKIRDLIGKGGETIKGIISTSSASVDVDDNGNVNIFSNDQKSFDTAMQMV. One can recognise an S1 motif domain in the interval 623–690; the sequence is GKVYTGKVVK…DRGRIKLSRK (68 aa).

It belongs to the polyribonucleotide nucleotidyltransferase family. As to quaternary structure, component of the RNA degradosome, which is a multiprotein complex involved in RNA processing and mRNA degradation. Mg(2+) serves as cofactor.

It localises to the cytoplasm. It carries out the reaction RNA(n+1) + phosphate = RNA(n) + a ribonucleoside 5'-diphosphate. Functionally, involved in mRNA degradation. Catalyzes the phosphorolysis of single-stranded polyribonucleotides processively in the 3'- to 5'-direction. This is Polyribonucleotide nucleotidyltransferase from Ruthia magnifica subsp. Calyptogena magnifica.